The following is a 443-amino-acid chain: MSELKERLLPPRPASAINLRGDAGSRPSPSGRQPLLGVDVLGLKKRGQGLKSWIRVDTSANSQVIEVDKFTMMRRCDLPARDLRLLDPLFVYPSTILGREKAIVVNLEQIRCIITADEVLLLNSLDNYVLRYVVELQQRLKASSVTEVWNQDSLELSRRRSRSLDNVLQNSSPDYLPFEFRALEVALEAACTFLDSQASELEIEAYPLLDELTSKISTLNLERARRLKSRLVALTRRVQKVRDEIEQLMDDDGDMAEMYLTEKKKRMEGSLYGDQSLPVYRTNDCFSLSAPVSPVSSPPESRRLEKSLSIVRSRHDSARSSEDATENIEELEMLLEAYFVVIDSTLNKLTSLKEYIDDTEDFINIQLDNVRNQLIQFELLLTTATFVVAIFGVVAGIFGMNFEIDFFEKPGAFKWVLAITGVCGLVVFLAFLWYYKRRRLMPL.

Residues 1–33 (MSELKERLLPPRPASAINLRGDAGSRPSPSGRQ) form a disordered region. 2 consecutive transmembrane segments (helical) span residues 379-399 (LLLT…GIFG) and 415-435 (WVLA…LWYY). The Required for magnesium transport activity motif lies at 399-401 (GMN).

This sequence belongs to the CorA metal ion transporter (MIT) (TC 1.A.35.5) family. As to expression, expressed in the whole plant.

It localises to the cell membrane. High-affinity magnesium transporter that mediates the influx of magnesium. Involved in tolerance to Aluminum. In Arabidopsis thaliana (Mouse-ear cress), this protein is Magnesium transporter MRS2-10 (MRS2-10).